We begin with the raw amino-acid sequence, 164 residues long: Lipoprotein signal peptidase (164 aa).

4 helical membrane-spanning segments follow: residues isoleucine 8 to valine 28, valine 39 to glutamine 59, valine 64 to methionine 84, and leucine 91 to phenylalanine 111. Catalysis depends on residues aspartate 118 and aspartate 140. The chain crosses the membrane as a helical span at residues tyrosine 131–leucine 151.

This sequence belongs to the peptidase A8 family.

The protein resides in the cell inner membrane. The catalysed reaction is Release of signal peptides from bacterial membrane prolipoproteins. Hydrolyzes -Xaa-Yaa-Zaa-|-(S,diacylglyceryl)Cys-, in which Xaa is hydrophobic (preferably Leu), and Yaa (Ala or Ser) and Zaa (Gly or Ala) have small, neutral side chains.. The protein operates within protein modification; lipoprotein biosynthesis (signal peptide cleavage). In terms of biological role, this protein specifically catalyzes the removal of signal peptides from prolipoproteins. This is Lipoprotein signal peptidase from Nitrobacter hamburgensis (strain DSM 10229 / NCIMB 13809 / X14).